Consider the following 291-residue polypeptide: MNKDIATPGRTREILEKYGFSFKKSLGQNFLIDTNILRKIVDFAELSDETGAIEIGPGIGALTEQLARRAKKVVAFEIDQRLLPILEDTLSPYGNIRIIHQDVLKADIHRVISEEFTGMTDIMVVANLPYYVTTPIIMKLLTDRLPIRGMVVMLQKEVADRLAAKPGTKDYGSLSIAIQYYTEAETVMTVPRTVFIPQPNVDSAVIRLIKRKQPPVKVEDEAFFFQVVRASFAQRRKTILNNLVNNLPNGKAMKEQIERVLTETDIDPRRRGETLTMEEFAALSNALQHVL.

The S-adenosyl-L-methionine site is built by asparagine 29, leucine 31, glycine 56, glutamate 77, aspartate 102, and asparagine 127.

The protein belongs to the class I-like SAM-binding methyltransferase superfamily. rRNA adenine N(6)-methyltransferase family. RsmA subfamily.

It localises to the cytoplasm. The catalysed reaction is adenosine(1518)/adenosine(1519) in 16S rRNA + 4 S-adenosyl-L-methionine = N(6)-dimethyladenosine(1518)/N(6)-dimethyladenosine(1519) in 16S rRNA + 4 S-adenosyl-L-homocysteine + 4 H(+). Specifically dimethylates two adjacent adenosines (A1518 and A1519) in the loop of a conserved hairpin near the 3'-end of 16S rRNA in the 30S particle. May play a critical role in biogenesis of 30S subunits. The protein is Ribosomal RNA small subunit methyltransferase A of Geobacillus sp. (strain WCH70).